The sequence spans 280 residues: Phosphatidylglycerol--prolipoprotein diacylglyceryl transferase (280 aa).

3 consecutive transmembrane segments (helical) span residues 21–41, 54–74, and 88–108; these read WYGI…ISEG, LLLW…VIFE, and IWNG…VLLI. R136 serves as a coordination point for a 1,2-diacyl-sn-glycero-3-phospho-(1'-sn-glycerol). 3 consecutive transmembrane segments (helical) span residues 176 to 196, 206 to 226, and 236 to 256; these read QPTF…ILSL, GEVF…VEGM, and IIRV…ILWI.

It belongs to the Lgt family.

It is found in the cell membrane. It catalyses the reaction L-cysteinyl-[prolipoprotein] + a 1,2-diacyl-sn-glycero-3-phospho-(1'-sn-glycerol) = an S-1,2-diacyl-sn-glyceryl-L-cysteinyl-[prolipoprotein] + sn-glycerol 1-phosphate + H(+). It participates in protein modification; lipoprotein biosynthesis (diacylglyceryl transfer). In terms of biological role, catalyzes the transfer of the diacylglyceryl group from phosphatidylglycerol to the sulfhydryl group of the N-terminal cysteine of a prolipoprotein, the first step in the formation of mature lipoproteins. This is Phosphatidylglycerol--prolipoprotein diacylglyceryl transferase from Lactobacillus acidophilus (strain ATCC 700396 / NCK56 / N2 / NCFM).